Consider the following 247-residue polypeptide: Acetoacetate decarboxylase 1 (247 aa).

Lys116 (schiff-base intermediate with acetoacetate) is an active-site residue.

Belongs to the ADC family.

It carries out the reaction acetoacetate + H(+) = acetone + CO2. Catalyzes the conversion of acetoacetate to acetone and carbon dioxide. In Mesorhizobium japonicum (strain LMG 29417 / CECT 9101 / MAFF 303099) (Mesorhizobium loti (strain MAFF 303099)), this protein is Acetoacetate decarboxylase 1.